A 36-amino-acid chain; its full sequence is Photosystem II reaction center protein M (36 aa).

The helical transmembrane segment at 5–25 threads the bilayer; the sequence is ILGVIATALFIIIPTSFLLIL.

Belongs to the PsbM family. PSII is composed of 1 copy each of membrane proteins PsbA, PsbB, PsbC, PsbD, PsbE, PsbF, PsbH, PsbI, PsbJ, PsbK, PsbL, PsbM, PsbT, PsbX, PsbY, PsbZ, Psb30/Ycf12, at least 3 peripheral proteins of the oxygen-evolving complex and a large number of cofactors. It forms dimeric complexes.

Its subcellular location is the plastid. The protein localises to the chloroplast thylakoid membrane. In terms of biological role, one of the components of the core complex of photosystem II (PSII). PSII is a light-driven water:plastoquinone oxidoreductase that uses light energy to abstract electrons from H(2)O, generating O(2) and a proton gradient subsequently used for ATP formation. It consists of a core antenna complex that captures photons, and an electron transfer chain that converts photonic excitation into a charge separation. This subunit is found at the monomer-monomer interface. The sequence is that of Photosystem II reaction center protein M from Chlorella vulgaris (Green alga).